The chain runs to 301 residues: Probable aspartoacylase (301 aa).

Zn(2+)-binding residues include histidine 13 and glutamate 16. Substrate-binding positions include arginine 54 and 61–62 (NR). Histidine 105 is a Zn(2+) binding site. Positions 163 and 273 each coordinate substrate.

It belongs to the AspA/AstE family. Aspartoacylase subfamily. Zn(2+) is required as a cofactor.

The enzyme catalyses an N-acyl-L-aspartate + H2O = a carboxylate + L-aspartate. In Prochlorococcus marinus (strain AS9601), this protein is Probable aspartoacylase.